The primary structure comprises 416 residues: Serine hydroxymethyltransferase (416 aa).

Residues L117 and 121-123 (GHL) contribute to the (6S)-5,6,7,8-tetrahydrofolate site. K225 carries the post-translational modification N6-(pyridoxal phosphate)lysine. 351-353 (SPF) serves as a coordination point for (6S)-5,6,7,8-tetrahydrofolate.

The protein belongs to the SHMT family. In terms of assembly, homodimer. It depends on pyridoxal 5'-phosphate as a cofactor.

The protein localises to the cytoplasm. The enzyme catalyses (6R)-5,10-methylene-5,6,7,8-tetrahydrofolate + glycine + H2O = (6S)-5,6,7,8-tetrahydrofolate + L-serine. Its pathway is one-carbon metabolism; tetrahydrofolate interconversion. The protein operates within amino-acid biosynthesis; glycine biosynthesis; glycine from L-serine: step 1/1. Catalyzes the reversible interconversion of serine and glycine with tetrahydrofolate (THF) serving as the one-carbon carrier. This reaction serves as the major source of one-carbon groups required for the biosynthesis of purines, thymidylate, methionine, and other important biomolecules. Also exhibits THF-independent aldolase activity toward beta-hydroxyamino acids, producing glycine and aldehydes, via a retro-aldol mechanism. This is Serine hydroxymethyltransferase from Blochmanniella pennsylvanica (strain BPEN).